A 153-amino-acid polypeptide reads, in one-letter code: Holo-[acyl-carrier-protein] synthase (153 aa).

The Mg(2+) site is built by D24 and E78.

It belongs to the P-Pant transferase superfamily. AcpS family. Requires Mg(2+) as cofactor.

It localises to the cytoplasm. It catalyses the reaction apo-[ACP] + CoA = holo-[ACP] + adenosine 3',5'-bisphosphate + H(+). Its function is as follows. Transfers the 4'-phosphopantetheine moiety from coenzyme A to a Ser of acyl-carrier-protein. This Bordetella pertussis (strain Tohama I / ATCC BAA-589 / NCTC 13251) protein is Holo-[acyl-carrier-protein] synthase.